The sequence spans 226 residues: Flagellar L-ring protein (226 aa).

A signal peptide spans 1–15 (MRILGLSAALLILGG). Residue cysteine 16 is the site of N-palmitoyl cysteine attachment. The S-diacylglycerol cysteine moiety is linked to residue cysteine 16.

The protein belongs to the FlgH family. The basal body constitutes a major portion of the flagellar organelle and consists of four rings (L,P,S, and M) mounted on a central rod.

The protein localises to the cell outer membrane. The protein resides in the bacterial flagellum basal body. In terms of biological role, assembles around the rod to form the L-ring and probably protects the motor/basal body from shearing forces during rotation. This Alteromonas mediterranea (strain DSM 17117 / CIP 110805 / LMG 28347 / Deep ecotype) protein is Flagellar L-ring protein.